Reading from the N-terminus, the 83-residue chain is Beta-defensin 19 (83 aa).

The first 19 residues, 1–19, serve as a signal peptide directing secretion; that stretch reads MRLALLLLAILVATELVVS. Intrachain disulfides connect Cys27/Cys54, Cys34/Cys48, and Cys38/Cys55.

It belongs to the beta-defensin family. Specifically expressed in male gonads (Sertoli cells).

It localises to the secreted. In terms of biological role, has antibacterial activity. This chain is Beta-defensin 19 (Defb19), found in Mus musculus (Mouse).